The chain runs to 353 residues: Stomatin-like protein 2, mitochondrial (353 aa).

A mitochondrion-targeting transit peptide spans Met-1–Ala-28. A Phosphoserine; by PKC/PRKCZ modification is found at Ser-17. Tyr-124 carries the post-translational modification Phosphotyrosine. Lys-145 is subject to N6-acetyllysine; alternate. At Lys-145 the chain carries N6-succinyllysine; alternate. Residues Ile-215 to Lys-252 adopt a coiled-coil conformation. Residue Lys-233 is modified to N6-acetyllysine. The tract at residues Val-324–Ser-353 is disordered. Phosphoserine is present on Ser-330.

Belongs to the band 7/mec-2 family. Forms homooligomers. Interacts with MFN2; may form heterooligomers. Interacts with PHB1 and PHB2; recruits them to cardiolipin-enriched mitochondrial membranes and stabilizes them. Interacts with CACNA2D2.

It is found in the cell membrane. The protein localises to the mitochondrion. The protein resides in the mitochondrion inner membrane. Its subcellular location is the mitochondrion intermembrane space. It localises to the membrane raft. It is found in the cytoplasm. The protein localises to the cytoskeleton. Functionally, mitochondrial protein that probably regulates the biogenesis and the activity of mitochondria. Stimulates cardiolipin biosynthesis, binds cardiolipin-enriched membranes where it recruits and stabilizes some proteins including prohibitin and may therefore act in the organization of functional microdomains in mitochondrial membranes. Through regulation of the mitochondrial function may play a role into several biological processes including cell migration, cell proliferation, T-cell activation, calcium homeostasis and cellular response to stress. May play a role in calcium homeostasis through negative regulation of calcium efflux from mitochondria. Required for mitochondrial hyperfusion a pro-survival cellular response to stress which results in increased ATP production by mitochondria. May also regulate the organization of functional domains at the plasma membrane and play a role in T-cell activation through association with the T-cell receptor signaling complex and its regulation. The sequence is that of Stomatin-like protein 2, mitochondrial (Stoml2) from Mus musculus (Mouse).